A 562-amino-acid polypeptide reads, in one-letter code: Gut esterase 1 (562 aa).

An N-terminal signal peptide occupies residues 1–16 (MRVLLASLLIFGACWA). An intrachain disulfide couples cysteine 75 to cysteine 93. Serine 199 serves as the catalytic Acyl-ester intermediate. A disulfide bond links cysteine 251 and cysteine 259. Catalysis depends on charge relay system residues glutamate 320 and histidine 451. Positions 559–562 (KDEL) match the Prevents secretion from ER motif.

This sequence belongs to the type-B carboxylesterase/lipase family. In terms of tissue distribution, expressed only in the intestine.

It is found in the endoplasmic reticulum lumen. The enzyme catalyses a carboxylic ester + H2O = an alcohol + a carboxylate + H(+). This chain is Gut esterase 1 (ges-1), found in Caenorhabditis briggsae.